The following is a 340-amino-acid chain: uncharacterized protein (340 aa).

A helical membrane pass occupies residues 6-26 (ITFGLLVLMVCVILFVLYVQL).

It localises to the cell membrane. This is an uncharacterized protein from Bacillus subtilis (strain 168).